Consider the following 154-residue polypeptide: Hydroperoxy fatty acid reductase Gpx2 (154 aa).

Cys34 is an active-site residue.

The protein belongs to the glutathione peroxidase family. Monomer.

It catalyses the reaction a hydroperoxy polyunsaturated fatty acid + NADPH + H(+) = a hydroxy polyunsaturated fatty acid + NADP(+) + H2O. Mercaptosuccinate, pCMB, and nethylmaleimide act as inhibitors of the catalytic activity. Its function is as follows. Hydroperoxy fatty acid reductase essential for the removal of lipid hydroperoxides under normal and stress conditions, leading to the protection of membrane integrity. The polypeptide is Hydroperoxy fatty acid reductase Gpx2 (gpx2) (Synechocystis sp. (strain ATCC 27184 / PCC 6803 / Kazusa)).